A 302-amino-acid chain; its full sequence is Eukaryotic translation initiation factor 3 subunit F (302 aa).

The 143-residue stretch at 23–165 folds into the MPN domain; that stretch reads IVIEPAVLFS…IKTYVSSPVG (143 aa). Serine 162 is modified (phosphoserine).

This sequence belongs to the eIF-3 subunit F family. Component of the eukaryotic translation initiation factor 3 (eIF-3) complex. The eIF-3 complex appears to include tif32/eif3a, SPAC25G10.08/eif3b, tif33/eif3c, SPBC4C3.07/eif3f, tif35/eif3g and sum1/eif3i. This set of common subunits may also associate exclusively with either moe1/eif3d and int6/eif3e, or with SPAC821.05/eif3h and SPAC1751.03/eif3m. The eIF-3 complex may also include SPAC3A12.13c/eif3j.

It is found in the cytoplasm. Component of the eukaryotic translation initiation factor 3 (eIF-3) complex, which is involved in protein synthesis of a specialized repertoire of mRNAs and, together with other initiation factors, stimulates binding of mRNA and methionyl-tRNAi to the 40S ribosome. The eIF-3 complex specifically targets and initiates translation of a subset of mRNAs involved in cell proliferation. The protein is Eukaryotic translation initiation factor 3 subunit F of Schizosaccharomyces pombe (strain 972 / ATCC 24843) (Fission yeast).